The sequence spans 26 residues: Oxyopinin-3a (26 aa).

Expressed by the venom gland.

It is found in the secreted. Its function is as follows. May have cytolytic and antimicrobial activity. The sequence is that of Oxyopinin-3a from Oxyopes takobius (Lynx spider).